A 397-amino-acid polypeptide reads, in one-letter code: Putative gustatory receptor 85a (397 aa).

The Cytoplasmic segment spans residues 1 to 56; sequence MYSLIEAQLLGGKLVNRVMASLRRIIQRSLGYFCALNGILDFNTDIGTGNLRRYRV. Residues 57-77 form a helical membrane-spanning segment; it reads LFMYRLLHNFAVISLTLKFLF. Topologically, residues 78–90 are extracellular; the sequence is DFTDHFKYIESST. Residues 91-111 traverse the membrane as a helical segment; that stretch reads LITVNFFTYFTLVFFALLSSM. Topologically, residues 112-151 are cytoplasmic; sequence GSCYQWQNRILAVLKELKHQRDLSRHMGYRVPRSKQNSID. A helical membrane pass occupies residues 152 to 172; it reads YLLFALTVLLILRLSIHLATF. The Extracellular portion of the chain corresponds to 173 to 186; that stretch reads TLSARMGFNHPCNC. A helical transmembrane segment spans residues 187–207; sequence FLPECMIFSMNYLLFAILAEI. Over 208 to 268 the chain is Cytoplasmic; the sequence is TRCWWSLQSG…RYVTLAYMAR (61 aa). The helical transmembrane segment at 269 to 289 threads the bilayer; the sequence is NLWSGIVAGYLLVRFVIGNGL. Residues 290-293 lie on the Extracellular side of the membrane; the sequence is QDVE. Residues 294–314 form a helical membrane-spanning segment; sequence LVYLVFSFITCIQPLMLSLLV. At 315-375 the chain is on the cytoplasmic side; sequence NSMTSTTGSL…FRINRSLAFR (61 aa). A helical transmembrane segment spans residues 376 to 396; sequence SASLILVHVLYMVQSDYISIT. Asn-397 is a topological domain (extracellular).

It belongs to the insect chemoreceptor superfamily. Gustatory receptor (GR) family. Gr22e subfamily.

The protein resides in the cell membrane. In terms of biological role, probable gustatory receptor which mediates acceptance or avoidance behavior, depending on its substrates. The polypeptide is Putative gustatory receptor 85a (Gr85a) (Drosophila melanogaster (Fruit fly)).